The following is a 318-amino-acid chain: Inner membrane protein YbhN (318 aa).

The Periplasmic portion of the chain corresponds to 1–13 (MSKSHPRWRLAKK). A helical transmembrane segment spans residues 14–34 (ILTWLFFIAVIVLLVVYAKKV). Over 35–50 (DWEEVWKVIRDYNRVA) the chain is Cytoplasmic. Residues 51–71 (LLSAVGLVVVSYLIYGCYDLL) traverse the membrane as a helical segment. Over 72 to 85 (ARFYCGHKLAKRQV) the chain is Periplasmic. Residues 86–106 (MLVSFICYAFNLTLSTWVGGI) traverse the membrane as a helical segment. The Cytoplasmic segment spans residues 107–125 (GMRYRLYSRLGLPGSTITR). A helical membrane pass occupies residues 126 to 146 (IFSLSITTNWLGYILLAGIIF). At 147 to 165 (TAGVVELPDHWYVDQTTLR) the chain is on the periplasmic side. A helical membrane pass occupies residues 166–186 (ILGIGLLMIIAVYLWFCAFAK). Over 187–205 (HRHMTIKGQKLVLPSWKFA) the chain is Cytoplasmic. A helical membrane pass occupies residues 206-226 (LAQMLISSVNWMVMGAIIWLL). The Periplasmic segment spans residues 227 to 233 (LGQSVNY). 2 helical membrane-spanning segments follow: residues 234–254 (FFVL…HIPA) and 255–275 (GIGV…TSKG). Over 276–277 (TI) the chain is Periplasmic. The chain crosses the membrane as a helical span at residues 278–298 (IAALLAYRVLYYFIPLLLALI). Topologically, residues 299–318 (CYLLLESQAKKLRAKNEAAM) are cytoplasmic.

To Synechocystis PCC 6803 slr0712.

The protein localises to the cell inner membrane. In Escherichia coli (strain K12), this protein is Inner membrane protein YbhN (ybhN).